The primary structure comprises 401 residues: L-rhamnonate dehydratase (401 aa).

Residues His-29 and Arg-55 each contribute to the substrate site. The Mg(2+) site is built by Asp-222, Glu-248, and Glu-276. His-325 (proton acceptor) is an active-site residue. Glu-345 serves as a coordination point for substrate.

Belongs to the mandelate racemase/muconate lactonizing enzyme family. RhamD subfamily. As to quaternary structure, homooctamer; tetramer of dimers. Mg(2+) is required as a cofactor.

It catalyses the reaction L-rhamnonate = 2-dehydro-3-deoxy-L-rhamnonate + H2O. Its function is as follows. Catalyzes the dehydration of L-rhamnonate to 2-keto-3-deoxy-L-rhamnonate (KDR). Can also dehydrate L-lyxonate, L-mannonate and D-gulonate, although less efficiently, but not 2-keto-4-hydroxyheptane-1,7-dioate. In Escherichia coli (strain K12), this protein is L-rhamnonate dehydratase (rhmD).